A 292-amino-acid chain; its full sequence is MNSGPGKKPDWLKIKLTSGSSFASTKKLLNKHSLHTVCRSAMCPNLHECWSKGTATFLLLGNVCTRSCRFCAVGTERRPAMPDPEETAKIGEAVKAMKLRHAVLTSVNRDDLADGGAAHWVETIRAIREVNPGVSIECLIPDFQGDEQALDSVMRERPEVLNHNIETVPSRYASVRPQASYERSLAVIERAKRQFRLATKSGMMVGMGETPEEVNAALRDLRAHGCDMVTIGQYLQPTATHLPVSRYVTPEEFERYREIALDAGFRHVQSGPFVRSSYHAEAFEPVEEISNS.

The [4Fe-4S] cluster site is built by Cys-38, Cys-43, Cys-49, Cys-64, Cys-68, Cys-71, and Ser-277. The region spanning 50 to 266 is the Radical SAM core domain; sequence WSKGTATFLL…REIALDAGFR (217 aa).

The protein belongs to the radical SAM superfamily. Lipoyl synthase family. [4Fe-4S] cluster is required as a cofactor.

It localises to the cytoplasm. The catalysed reaction is [[Fe-S] cluster scaffold protein carrying a second [4Fe-4S](2+) cluster] + N(6)-octanoyl-L-lysyl-[protein] + 2 oxidized [2Fe-2S]-[ferredoxin] + 2 S-adenosyl-L-methionine + 4 H(+) = [[Fe-S] cluster scaffold protein] + N(6)-[(R)-dihydrolipoyl]-L-lysyl-[protein] + 4 Fe(3+) + 2 hydrogen sulfide + 2 5'-deoxyadenosine + 2 L-methionine + 2 reduced [2Fe-2S]-[ferredoxin]. Its pathway is protein modification; protein lipoylation via endogenous pathway; protein N(6)-(lipoyl)lysine from octanoyl-[acyl-carrier-protein]: step 2/2. Functionally, catalyzes the radical-mediated insertion of two sulfur atoms into the C-6 and C-8 positions of the octanoyl moiety bound to the lipoyl domains of lipoate-dependent enzymes, thereby converting the octanoylated domains into lipoylated derivatives. The polypeptide is Lipoyl synthase (Chlorobaculum parvum (strain DSM 263 / NCIMB 8327) (Chlorobium vibrioforme subsp. thiosulfatophilum)).